A 399-amino-acid chain; its full sequence is F-box protein At1g30790 (399 aa).

The 47-residue stretch at 3 to 49 (RQEIDHIPFDLTVEILTRLPAKSLMKFKCVSKLWSSIIHNQSFIDSF) folds into the F-box domain.

The protein is F-box protein At1g30790 of Arabidopsis thaliana (Mouse-ear cress).